Consider the following 216-residue polypeptide: Phosphatidylserine decarboxylase proenzyme (216 aa).

The Schiff-base intermediate with substrate; via pyruvic acid role is filled by Ser182. Ser182 carries the pyruvic acid (Ser); by autocatalysis modification.

It belongs to the phosphatidylserine decarboxylase family. PSD-A subfamily. Heterodimer of a large membrane-associated beta subunit and a small pyruvoyl-containing alpha subunit. Pyruvate serves as cofactor. Is synthesized initially as an inactive proenzyme. Formation of the active enzyme involves a self-maturation process in which the active site pyruvoyl group is generated from an internal serine residue via an autocatalytic post-translational modification. Two non-identical subunits are generated from the proenzyme in this reaction, and the pyruvate is formed at the N-terminus of the alpha chain, which is derived from the carboxyl end of the proenzyme. The post-translation cleavage follows an unusual pathway, termed non-hydrolytic serinolysis, in which the side chain hydroxyl group of the serine supplies its oxygen atom to form the C-terminus of the beta chain, while the remainder of the serine residue undergoes an oxidative deamination to produce ammonia and the pyruvoyl prosthetic group on the alpha chain.

The protein localises to the cell membrane. The enzyme catalyses a 1,2-diacyl-sn-glycero-3-phospho-L-serine + H(+) = a 1,2-diacyl-sn-glycero-3-phosphoethanolamine + CO2. It participates in phospholipid metabolism; phosphatidylethanolamine biosynthesis; phosphatidylethanolamine from CDP-diacylglycerol: step 2/2. Functionally, catalyzes the formation of phosphatidylethanolamine (PtdEtn) from phosphatidylserine (PtdSer). This is Phosphatidylserine decarboxylase proenzyme from Burkholderia mallei (strain NCTC 10247).